The following is a 1633-amino-acid chain: Laminin-like protein lam-2 (1633 aa).

An N-terminal signal peptide occupies residues 1–19 (MTSILWLFSLAVLWHMGQP). One can recognise a Laminin N-terminal domain in the interval 47 to 286 (QPQRCVPDFV…AISDFAVGGR (240 aa)). N-linked (GlcNAc...) asparagine glycosylation is found at N116 and N136. 16 disulfides stabilise this stretch: C287–C296, C289–C310, C312–C321, C324–C344, C347–C356, C349–C372, C375–C384, C387–C400, C403–C415, C405–C421, C423–C432, C435–C447, C450–C464, C452–C471, C473–C482, and C485–C500. 4 consecutive Laminin EGF-like domains span residues 287–346 (CKCN…ECIA), 347–402 (CNCS…YCVA), 403–449 (CGCN…GCKN), and 450–502 (CGCE…GCTP). An N-linked (GlcNAc...) asparagine glycan is attached at N348. Residues 503 to 512 (CFCFGHSSIC) form the Laminin EGF-like 5; first part domain. N-linked (GlcNAc...) asparagine glycans are attached at residues N522, N658, and N740. The 173-residue stretch at 529–701 (QDKQKWAGQN…NPKQATWIEH (173 aa)) folds into the Laminin IV type A domain. The Laminin EGF-like 5; second part domain maps to 702-747 (CECLPGFVGQFCESCESGFRRETKFGGPFNHCIKCDCHNHSNSCEA). Cystine bridges form between C736-C745, C738-C752, C754-C763, C766-C782, C785-C803, C806-C815, C818-C832, C835-C849, C837-C856, C859-C868, C871-C887, C890-C909, C892-C916, C918-C927, C930-C943, C946-C958, C948-C965, C967-C976, C979-C991, C994-C1006, C996-C1013, C1015-C1024, and C1027-C1038. The 33-residue stretch at 752 to 784 (CICEHNTAGDTCERCARGYYGDALQGTEEDCQK) folds into the Laminin EGF-like 6; truncated domain. Laminin EGF-like domains lie at 785-834 (CPCP…ECVE), 835-889 (CACS…NCQS), 890-945 (CGCF…GCQE), 946-993 (CNCD…GCQP), and 994-1040 (CDCE…GCLP). An N-linked (GlcNAc...) asparagine glycan is attached at N936. Residues N1077, N1183, N1226, N1259, N1336, N1452, and N1528 are each glycosylated (N-linked (GlcNAc...) asparagine).

Its function is as follows. During the formation of neuromuscular junctions at the larval stage, negatively regulates membrane protrusion from body wall muscles, probably downstream of the integrin complex formed by pat-2 and pat-3. This chain is Laminin-like protein lam-2 (lam-2), found in Caenorhabditis elegans.